Reading from the N-terminus, the 84-residue chain is Putative antitoxin VapB37 (84 aa).

Probable antitoxin component of a type II toxin-antitoxin (TA) system. Its putative cognate toxin is VapC37. The protein is Putative antitoxin VapB37 (vapB37) of Mycobacterium tuberculosis (strain CDC 1551 / Oshkosh).